The chain runs to 624 residues: Chaperone protein HtpG (624 aa).

Residues 1-336 (MKGQETRGFQ…SNDLPLNVSR (336 aa)) form an a; substrate-binding region. The interval 337–552 (EILQDSTVTR…ADEMSTQMAK (216 aa)) is b. The interval 553–624 (LFAAAGQSVP…IRRMNQLLVS (72 aa)) is c.

Belongs to the heat shock protein 90 family. Homodimer. In terms of processing, UMPylated on a histidine residue by YdiU under ATP-limited conditions.

It localises to the cytoplasm. With respect to regulation, UMPylation of the chaperone by YdiU negatively regulates its activity, facilitating Salmonella survival under ATP-limited conditions. Its function is as follows. Molecular chaperone. Has ATPase activity. The sequence is that of Chaperone protein HtpG from Salmonella typhimurium (strain LT2 / SGSC1412 / ATCC 700720).